We begin with the raw amino-acid sequence, 489 residues long: Glutamate--tRNA ligase (489 aa).

The 'HIGH' region motif lies at 11–21; sequence PSPTGHLHIGG. Zn(2+)-binding residues include Cys108, Cys110, Cys136, and His138. A 'KMSKS' region motif is present at residues 253–257; sequence KLSKR. Lys256 is an ATP binding site.

It belongs to the class-I aminoacyl-tRNA synthetase family. Glutamate--tRNA ligase type 1 subfamily. In terms of assembly, monomer. It depends on Zn(2+) as a cofactor.

Its subcellular location is the cytoplasm. The catalysed reaction is tRNA(Glu) + L-glutamate + ATP = L-glutamyl-tRNA(Glu) + AMP + diphosphate. Its function is as follows. Catalyzes the attachment of glutamate to tRNA(Glu) in a two-step reaction: glutamate is first activated by ATP to form Glu-AMP and then transferred to the acceptor end of tRNA(Glu). The polypeptide is Glutamate--tRNA ligase (Geobacillus thermodenitrificans (strain NG80-2)).